Here is a 186-residue protein sequence, read N- to C-terminus: ADP-ribosylation factor-like protein 6 (186 aa).

Gly2 carries the N-myristoyl glycine lipid modification. Residues 24–31 (GLDNSGKT), Thr50, 69–73 (DMSGQ), Gly72, 130–133 (NKMD), and Ala164 each bind GTP. Thr50 is a binding site for Mg(2+).

Belongs to the small GTPase superfamily. Arf family. As to quaternary structure, interacts with SEC61B, ARL6IP1, ARL6IP2, ARL6IP3, ARL6IP4 ARL6IP5 and ARL6IP6. Interacts (GTP-bound form) with the BBSome a complex that contains BBS1, BBS2, BBS4, BBS5, BBS7, BBS8/TTC8, BBS9 and BBIP10. Interacts (GTP-free form) with IFT27. As to expression, most abundant in brain and kidney. Expressed in heart and eye. Isoform 2 is expressed only in the retina.

The protein resides in the cell projection. The protein localises to the cilium membrane. Its subcellular location is the cytoplasm. It is found in the cytoskeleton. It localises to the cilium axoneme. The protein resides in the cilium basal body. Involved in membrane protein trafficking at the base of the ciliary organelle. Mediates recruitment onto plasma membrane of the BBSome complex which would constitute a coat complex required for sorting of specific membrane proteins to the primary cilia. Together with BBS1, is necessary for correct trafficking of PKD1 to primary cilia. Together with the BBSome complex and LTZL1, controls SMO ciliary trafficking and contributes to the sonic hedgehog (SHH) pathway regulation. May regulate cilia assembly and disassembly and subsequent ciliary signaling events such as the Wnt signaling cascade. Isoform 2 may be required for proper retinal function and organization. The chain is ADP-ribosylation factor-like protein 6 (Arl6) from Mus musculus (Mouse).